The following is a 395-amino-acid chain: Putative 8-amino-7-oxononanoate synthase (395 aa).

Substrate is bound at residue arginine 23. 110–111 (GY) lines the pyridoxal 5'-phosphate pocket. Position 135 (histidine 135) interacts with substrate. Residues serine 182, 207 to 210 (DEAH), and 239 to 242 (TFSK) contribute to the pyridoxal 5'-phosphate site. An N6-(pyridoxal phosphate)lysine modification is found at lysine 242. Threonine 356 serves as a coordination point for substrate.

Belongs to the class-II pyridoxal-phosphate-dependent aminotransferase family. BioF subfamily. As to quaternary structure, homodimer. The cofactor is pyridoxal 5'-phosphate.

It carries out the reaction 6-carboxyhexanoyl-[ACP] + L-alanine + H(+) = (8S)-8-amino-7-oxononanoate + holo-[ACP] + CO2. The protein operates within cofactor biosynthesis; biotin biosynthesis. Its function is as follows. Catalyzes the decarboxylative condensation of pimeloyl-[acyl-carrier protein] and L-alanine to produce 8-amino-7-oxononanoate (AON), [acyl-carrier protein], and carbon dioxide. The chain is Putative 8-amino-7-oxononanoate synthase (bioF) from Bacillus cereus (strain ATCC 10987 / NRS 248).